We begin with the raw amino-acid sequence, 123 residues long: Hydrogenase maturation factor HypA (123 aa).

H2 contacts Ni(2+). The Zn(2+) site is built by C73, C76, C90, and C93.

This sequence belongs to the HypA/HybF family.

In terms of biological role, involved in the maturation of [NiFe] hydrogenases. Required for nickel insertion into the metal center of the hydrogenase. This Roseiflexus sp. (strain RS-1) protein is Hydrogenase maturation factor HypA.